We begin with the raw amino-acid sequence, 231 residues long: MATIRRLKQLRTYEVALSRHGLGPVAGVDEAGRGACCGPISIAACILPDRPIADLAVLTDSKQLSPPVRARLMPLVKKHAVAWSVIHISAADIDRFGIQHANISGMRRAVAALEVRPGYVLTDAFRIPGLPCPSLPIPGGDASARCIAAASVLAKQTRDEIMTDMAQQFPQYGLAGHKGYSTKVHMDAVRRHGASPQHRYSYANVAKAHREWALSHSDTEVQNTGKVEHER.

An RNase H type-2 domain is found at 23 to 214 (GPVAGVDEAG…VAKAHREWAL (192 aa)). A divalent metal cation-binding residues include D29, E30, and D123.

The protein belongs to the RNase HII family. The cofactor is Mn(2+). It depends on Mg(2+) as a cofactor.

Its subcellular location is the cytoplasm. It catalyses the reaction Endonucleolytic cleavage to 5'-phosphomonoester.. In terms of biological role, endonuclease that specifically degrades the RNA of RNA-DNA hybrids. This chain is Ribonuclease HII, found in Corynebacterium efficiens (strain DSM 44549 / YS-314 / AJ 12310 / JCM 11189 / NBRC 100395).